Consider the following 286-residue polypeptide: Release factor glutamine methyltransferase (286 aa).

Residues 120–124 (GTGSG), Asp-143, Trp-172, and Asn-187 contribute to the S-adenosyl-L-methionine site. 187 to 190 (NPPY) lines the substrate pocket.

The protein belongs to the protein N5-glutamine methyltransferase family. PrmC subfamily.

The enzyme catalyses L-glutaminyl-[peptide chain release factor] + S-adenosyl-L-methionine = N(5)-methyl-L-glutaminyl-[peptide chain release factor] + S-adenosyl-L-homocysteine + H(+). Functionally, methylates the class 1 translation termination release factors RF1/PrfA and RF2/PrfB on the glutamine residue of the universally conserved GGQ motif. This chain is Release factor glutamine methyltransferase, found in Gloeobacter violaceus (strain ATCC 29082 / PCC 7421).